A 279-amino-acid chain; its full sequence is Putative pyruvate, phosphate dikinase regulatory protein (279 aa).

ADP is bound at residue 153 to 160 (GVSRTSKT).

The protein belongs to the pyruvate, phosphate/water dikinase regulatory protein family. PDRP subfamily.

It catalyses the reaction N(tele)-phospho-L-histidyl/L-threonyl-[pyruvate, phosphate dikinase] + ADP = N(tele)-phospho-L-histidyl/O-phospho-L-threonyl-[pyruvate, phosphate dikinase] + AMP + H(+). It carries out the reaction N(tele)-phospho-L-histidyl/O-phospho-L-threonyl-[pyruvate, phosphate dikinase] + phosphate + H(+) = N(tele)-phospho-L-histidyl/L-threonyl-[pyruvate, phosphate dikinase] + diphosphate. Functionally, bifunctional serine/threonine kinase and phosphorylase involved in the regulation of the pyruvate, phosphate dikinase (PPDK) by catalyzing its phosphorylation/dephosphorylation. In Rhodopseudomonas palustris (strain HaA2), this protein is Putative pyruvate, phosphate dikinase regulatory protein.